The primary structure comprises 28 residues: Kappa-stichotoxin-Shd1a/kappa-stichotoxin-Shd1b (28 aa).

Position 6 is a 4-hydroxyproline; in form SHTX-1 (Shd1a) (Pro6). Intrachain disulfides connect Cys7–Cys19 and Cys10–Cys25.

Belongs to the sea anemone BBH family. Occurs in 2 forms which differ in the post-translational modification of Pro-6. In form SHTX-1 (Shd1a) Pro-6 is a hydroxyproline while in form SHTX-2 (Shd1b) Pro-6 is unmodified.

It is found in the secreted. The protein resides in the nematocyst. Functionally, kappa-stichotoxin-Shd1a: inhibits voltage-gated potassium channels (Kv). Kappa-stichotoxin-Shd1b: inhibits voltage-gated potassium channels (Kv). This toxin inhibits the binding of 125I-alpha-dendrotoxin to synaptosomal membranes (IC(50)=270 nM). The sequence is that of Kappa-stichotoxin-Shd1a/kappa-stichotoxin-Shd1b from Stichodactyla haddoni (Saddle carpet anemone).